A 364-amino-acid polypeptide reads, in one-letter code: Histidinol-phosphate aminotransferase (364 aa).

Lysine 225 is subject to N6-(pyridoxal phosphate)lysine.

The protein belongs to the class-II pyridoxal-phosphate-dependent aminotransferase family. Histidinol-phosphate aminotransferase subfamily. As to quaternary structure, homodimer. It depends on pyridoxal 5'-phosphate as a cofactor.

The enzyme catalyses L-histidinol phosphate + 2-oxoglutarate = 3-(imidazol-4-yl)-2-oxopropyl phosphate + L-glutamate. Its pathway is amino-acid biosynthesis; L-histidine biosynthesis; L-histidine from 5-phospho-alpha-D-ribose 1-diphosphate: step 7/9. The chain is Histidinol-phosphate aminotransferase from Sulfurovum sp. (strain NBC37-1).